Here is a 412-residue protein sequence, read N- to C-terminus: Multifunctional CCA protein (412 aa).

Residues Gly-8 and Arg-11 each contribute to the ATP site. Gly-8 and Arg-11 together coordinate CTP. Asp-21 and Asp-23 together coordinate Mg(2+). Positions 91, 137, and 140 each coordinate ATP. The CTP site is built by Arg-91, Arg-137, and Arg-140. An HD domain is found at 226-327 (TGIHTMMVID…VTLFEKTDAL (102 aa)).

Belongs to the tRNA nucleotidyltransferase/poly(A) polymerase family. Bacterial CCA-adding enzyme type 1 subfamily. As to quaternary structure, monomer. Can also form homodimers and oligomers. It depends on Mg(2+) as a cofactor. Ni(2+) is required as a cofactor.

The enzyme catalyses a tRNA precursor + 2 CTP + ATP = a tRNA with a 3' CCA end + 3 diphosphate. It catalyses the reaction a tRNA with a 3' CCA end + 2 CTP + ATP = a tRNA with a 3' CCACCA end + 3 diphosphate. Functionally, catalyzes the addition and repair of the essential 3'-terminal CCA sequence in tRNAs without using a nucleic acid template. Adds these three nucleotides in the order of C, C, and A to the tRNA nucleotide-73, using CTP and ATP as substrates and producing inorganic pyrophosphate. tRNA 3'-terminal CCA addition is required both for tRNA processing and repair. Also involved in tRNA surveillance by mediating tandem CCA addition to generate a CCACCA at the 3' terminus of unstable tRNAs. While stable tRNAs receive only 3'-terminal CCA, unstable tRNAs are marked with CCACCA and rapidly degraded. The sequence is that of Multifunctional CCA protein from Dechloromonas aromatica (strain RCB).